A 389-amino-acid chain; its full sequence is MGKKDKNVSVEEEVDEAEIEKLAAENANKPAPQLTKEDLDAMDDAEPGTSRLALIGKMIKKVSIGTDISNISMPGSFILAKSTLSYFSDNFSSFFGELLKANKIDNELERMLQVQRYLFTTLKETEDTTRKPLNPILGETWQANIHVKDGDGNDVTDNYFFAEQISHHPPISSSTVYNKKEGVNCTFCLPVRSQFMGTYVKISFEGESHITFEKYDEKFTFVAPPMAIRIFRSFSEYVGKGILKSDKNDYLIKSTYTSKPLFGGVYNGFESKVYKGKEKLYKIKGTWSGDMKITNLKTNETTPFFTRPTESAKVVFPDDGNTLPTDSSVVWKGVFDASKKDDVKGMSQEKVKVEEEQRKLAHHRKNADEWKPVHFNKIDGRWQLVNLKD.

Coiled-coil stretches lie at residues 1–31 and 340–371; these read MGKKDKNVSVEEEVDEAEIEKLAAENANKPA and KDDVKGMSQEKVKVEEEQRKLAHHRKNADEWK. Residues 1–43 are disordered; it reads MGKKDKNVSVEEEVDEAEIEKLAAENANKPAPQLTKEDLDAMD.

It belongs to the OSBP family. As to quaternary structure, interacts with dstC.

The protein resides in the cytoplasm. May play a role in the regulation of the slug-fruiting body switch. This is Oxysterol-binding protein 1 (osbA) from Dictyostelium discoideum (Social amoeba).